Here is a 122-residue protein sequence, read N- to C-terminus: Probable non-specific lipid-transfer protein 3 (122 aa).

Residues 1–29 form the signal peptide; sequence MARLNSKAVAAAVVLAAVVLMMAGREASA. 4 disulfide bridges follow: cysteine 33–cysteine 81, cysteine 43–cysteine 58, cysteine 59–cysteine 104, and cysteine 79–cysteine 118.

Belongs to the plant LTP family. Expressed in phloem. Also detected in the epidermis near the vascular tissues in resistant plants infected by Hessian fly larvae.

Plant non-specific lipid-transfer proteins transfer phospholipids as well as galactolipids across membranes. May play a role in wax or cutin deposition in the cell walls of expanding epidermal cells and certain secretory tissues. The sequence is that of Probable non-specific lipid-transfer protein 3 (LTP3) from Triticum aestivum (Wheat).